We begin with the raw amino-acid sequence, 209 residues long: Large ribosomal subunit protein uL3 (209 aa).

Residue glutamine 150 is modified to N5-methylglutamine.

This sequence belongs to the universal ribosomal protein uL3 family. In terms of assembly, part of the 50S ribosomal subunit. Forms a cluster with proteins L14 and L19. Post-translationally, methylated by PrmB.

Its function is as follows. One of the primary rRNA binding proteins, it binds directly near the 3'-end of the 23S rRNA, where it nucleates assembly of the 50S subunit. The sequence is that of Large ribosomal subunit protein uL3 from Citrobacter koseri (strain ATCC BAA-895 / CDC 4225-83 / SGSC4696).